The primary structure comprises 260 residues: DNA repair protein RecO (260 aa).

This sequence belongs to the RecO family.

In terms of biological role, involved in DNA repair and RecF pathway recombination. The chain is DNA repair protein RecO from Streptococcus gordonii (strain Challis / ATCC 35105 / BCRC 15272 / CH1 / DL1 / V288).